A 241-amino-acid polypeptide reads, in one-letter code: Phosphoadenosine 5'-phosphosulfate reductase (241 aa).

Cys235 functions as the Nucleophile; cysteine thiosulfonate intermediate in the catalytic mechanism.

It belongs to the PAPS reductase family. CysH subfamily.

It is found in the cytoplasm. It catalyses the reaction [thioredoxin]-disulfide + sulfite + adenosine 3',5'-bisphosphate + 2 H(+) = [thioredoxin]-dithiol + 3'-phosphoadenylyl sulfate. It functions in the pathway sulfur metabolism; hydrogen sulfide biosynthesis; sulfite from sulfate: step 3/3. Its function is as follows. Catalyzes the formation of sulfite from phosphoadenosine 5'-phosphosulfate (PAPS) using thioredoxin as an electron donor. In Xanthomonas euvesicatoria pv. vesicatoria (strain 85-10) (Xanthomonas campestris pv. vesicatoria), this protein is Phosphoadenosine 5'-phosphosulfate reductase.